The sequence spans 388 residues: Basigin (388 aa).

Positions 1-22 are cleaved as a signal peptide; sequence MAAALLLALAFTFLSGQGACAA. Residues 23-326 are Extracellular-facing; the sequence is AGFLKAPMSQ…ISLRVRSRLA (304 aa). The Ig-like domain maps to 37-120; sequence GGSVVLHCEA…SSDPDRNHLT (84 aa). Disulfide bonds link cysteine 44–cysteine 108, cysteine 157–cysteine 203, and cysteine 242–cysteine 304. Positions 138-219 constitute an Ig-like C2-type domain; that stretch reads EPGTIVTSVQ…VGRGNINVEG (82 aa). Residues asparagine 160, asparagine 269, and asparagine 305 are each glycosylated (N-linked (GlcNAc...) asparagine). Residues 221 to 320 form the Ig-like V-type domain; the sequence is PRIKVGKKSE…GSARETISLR (100 aa). Residues 327–347 traverse the membrane as a helical segment; sequence ALWPFLGIVAEVLVLVTIIFI. The Cytoplasmic portion of the chain corresponds to 348–388; sequence YEKRRKPDQTLDEDDPGAAPLKGSGSHLNDKDKNVRQRNAT. The tract at residues 355-388 is disordered; the sequence is DQTLDEDDPGAAPLKGSGSHLNDKDKNVRQRNAT. The residue at position 357 (threonine 357) is a Phosphothreonine. Serine 371 carries the post-translational modification Phosphoserine.

Homooligomer. Interacts with NXNL1, SLC2A1 and SLC16A1/GLUT1. Interacts with XKR8; promoting its localization at the cell membrane. In terms of assembly, homooligomer. Interacts with SLC16A1; interaction mediates SLC16A1 targeting to the plasma membrane. Interacts with SLC16A3; interaction mediates SLC16A3 targeting to the plasma membrane. Interacts with VEGFA, KDR/VEGFR2, PPIA/CYPA, SLC16A12, SLC16A11, ATP1B2, MAG, L1CAM and AJAP1. Interacts with PPIL2; regulates BSG transport to the cell membrane. As to quaternary structure, interacts with SLC16A6; this interaction mediates targeting to the plasma membrane. As to expression, expressed in the skeletal muscle, liver, small intestine, kidney, testis, brain, heart and spleen. Also present in various immature cells and endothelia.

Its subcellular location is the cell membrane. The protein resides in the photoreceptor inner segment. The protein localises to the cell projection. It localises to the cilium. It is found in the photoreceptor outer segment. Its subcellular location is the endoplasmic reticulum membrane. The protein resides in the basolateral cell membrane. Functionally, essential for normal retinal maturation and development. Acts as a retinal cell surface receptor for NXNL1 and plays an important role in NXNL1-mediated survival of retinal cone photoreceptors. In association with glucose transporter SLC16A1/GLUT1 and NXNL1, promotes retinal cone survival by enhancing aerobic glycolysis and accelerating the entry of glucose into photoreceptors. In terms of biological role, signaling receptor for cyclophilins, essential for PPIA/CYPA and PPIB/CYPB-dependent signaling related to chemotaxis and adhesion of immune cells. Plays an important role in targeting the monocarboxylate transporters SLC16A1/GLUT1 and SLC16A3 to the plasma membrane. Acts as a coreceptor for vascular endothelial growth factor receptor 2 (KDR/VEGFR2) in endothelial cells enhancing its VEGFA-mediated activation and downstream signaling. Promotes angiogenesis through EPAS1/HIF2A-mediated up-regulation of VEGFA and KDR/VEGFR2 in endothelial cells. Plays an important role in spermatogenesis; mediates interactions between germ cells and Sertoli cell and is essential for the development/differentiation of germ cells to round spermatids. The chain is Basigin (Bsg) from Rattus norvegicus (Rat).